A 413-amino-acid chain; its full sequence is Serine/threonine transporter SstT (413 aa).

A run of 9 helical transmembrane segments spans residues 14-34, 44-64, 82-102, 141-161, 178-198, 217-237, 290-310, 330-350, and 356-376; these read GSLVGQILVGLVLGIALASFS, LGTLFVSALKAVAPVLVFILV, IVLLYLLGTFAAALVAVVVSF, ALASGNFIGILAWAIGLGVAL, GVTFIVRVVIRFAPLGIFGLV, LMVLIGAMLLVALVLNPLIVF, IPLGATINMAGAAITITVLTL, LVAAVCACGASGVAGGSLLLI, and LFGISSDIAMQVVAVGFIIGV.

Belongs to the dicarboxylate/amino acid:cation symporter (DAACS) (TC 2.A.23) family.

The protein resides in the cell inner membrane. The enzyme catalyses L-serine(in) + Na(+)(in) = L-serine(out) + Na(+)(out). It carries out the reaction L-threonine(in) + Na(+)(in) = L-threonine(out) + Na(+)(out). In terms of biological role, involved in the import of serine and threonine into the cell, with the concomitant import of sodium (symport system). In Edwardsiella ictaluri (strain 93-146), this protein is Serine/threonine transporter SstT.